The primary structure comprises 147 residues: Putative pre-16S rRNA nuclease (147 aa).

The protein belongs to the YqgF nuclease family.

The protein resides in the cytoplasm. In terms of biological role, could be a nuclease involved in processing of the 5'-end of pre-16S rRNA. This is Putative pre-16S rRNA nuclease from Limosilactobacillus reuteri (strain DSM 20016) (Lactobacillus reuteri).